We begin with the raw amino-acid sequence, 202 residues long: Ribosome maturation factor RimM (202 aa).

Positions 100-195 constitute a PRC barrel domain; that stretch reads ADEWYPKDLI…YLTLDPPGGL (96 aa).

This sequence belongs to the RimM family. In terms of assembly, binds ribosomal protein uS19.

It is found in the cytoplasm. Its function is as follows. An accessory protein needed during the final step in the assembly of 30S ribosomal subunit, possibly for assembly of the head region. Essential for efficient processing of 16S rRNA. May be needed both before and after RbfA during the maturation of 16S rRNA. It has affinity for free ribosomal 30S subunits but not for 70S ribosomes. This is Ribosome maturation factor RimM from Bifidobacterium longum (strain NCC 2705).